Consider the following 479-residue polypeptide: DNA polymerase IV (479 aa).

A UmuC domain is found at 7–189; that stretch reads ILHLDMDAFF…MTVRTLPGVG (183 aa). Asp-11 and Asp-105 together coordinate Mg(2+). The active site involves Glu-106. 2 disordered regions span residues 357–400 and 430–479; these read AGDR…GHGW and DPEL…TSRP. Residues 381–396 are compositionally biased toward basic and acidic residues; that stretch reads AERRWPSGHDVRHTEL.

The protein belongs to the DNA polymerase type-Y family. In terms of assembly, monomer. It depends on Mg(2+) as a cofactor.

The protein resides in the cytoplasm. It catalyses the reaction DNA(n) + a 2'-deoxyribonucleoside 5'-triphosphate = DNA(n+1) + diphosphate. Functionally, poorly processive, error-prone DNA polymerase involved in untargeted mutagenesis. Copies undamaged DNA at stalled replication forks, which arise in vivo from mismatched or misaligned primer ends. These misaligned primers can be extended by PolIV. Exhibits no 3'-5' exonuclease (proofreading) activity. May be involved in translesional synthesis, in conjunction with the beta clamp from PolIII. This Streptomyces coelicolor (strain ATCC BAA-471 / A3(2) / M145) protein is DNA polymerase IV.